Consider the following 300-residue polypeptide: MPELPEVEIVKQGLNQLTLNKRILGGEVLLERTLAYPISVADFLRGLEGKAIAQWHRQGKYLLAQLYKWGKKNSKLQEYENEDGWLGVHLRMTGQLLWVNPEESLHKHTRVRLFFGHNSSGDKDSSNYELRFVDQRTFGKMWGVPPGKEISKVITGLQQLGLEPFSPEFSPKYLNKKLYKRHRPIKTALLDQTTIAGLGNIYADEALFLSGIRPTTICKDLTEKQIEQLHLAILKVLQTAINAGGTTFSNFLNVKGVNGNYGGVAWVYSRAGQPCRICNTPLEKIKLAGRSTHFCPQCQK.

The active-site Schiff-base intermediate with DNA is proline 2. The active-site Proton donor is glutamate 3. The active-site Proton donor; for beta-elimination activity is lysine 60. DNA contacts are provided by histidine 108, arginine 136, and arginine 181. An FPG-type zinc finger spans residues 266–300; the sequence is WVYSRAGQPCRICNTPLEKIKLAGRSTHFCPQCQK. Arginine 290 acts as the Proton donor; for delta-elimination activity in catalysis.

This sequence belongs to the FPG family. In terms of assembly, monomer. The cofactor is Zn(2+).

It carries out the reaction Hydrolysis of DNA containing ring-opened 7-methylguanine residues, releasing 2,6-diamino-4-hydroxy-5-(N-methyl)formamidopyrimidine.. It catalyses the reaction 2'-deoxyribonucleotide-(2'-deoxyribose 5'-phosphate)-2'-deoxyribonucleotide-DNA = a 3'-end 2'-deoxyribonucleotide-(2,3-dehydro-2,3-deoxyribose 5'-phosphate)-DNA + a 5'-end 5'-phospho-2'-deoxyribonucleoside-DNA + H(+). Functionally, involved in base excision repair of DNA damaged by oxidation or by mutagenic agents. Acts as a DNA glycosylase that recognizes and removes damaged bases. Has a preference for oxidized purines, such as 7,8-dihydro-8-oxoguanine (8-oxoG). Has AP (apurinic/apyrimidinic) lyase activity and introduces nicks in the DNA strand. Cleaves the DNA backbone by beta-delta elimination to generate a single-strand break at the site of the removed base with both 3'- and 5'-phosphates. This is Formamidopyrimidine-DNA glycosylase from Trichodesmium erythraeum (strain IMS101).